The chain runs to 165 residues: Phosphopantetheine adenylyltransferase (165 aa).

Thr10 serves as a coordination point for substrate. ATP is bound by residues 10–11 and His18; that span reads TF. Lys42, Leu75, and Arg89 together coordinate substrate. Residues 90 to 92, Glu100, and 125 to 131 contribute to the ATP site; these read GVR and YTYVAST.

This sequence belongs to the bacterial CoaD family. In terms of assembly, homohexamer. The cofactor is Mg(2+).

It localises to the cytoplasm. The catalysed reaction is (R)-4'-phosphopantetheine + ATP + H(+) = 3'-dephospho-CoA + diphosphate. It participates in cofactor biosynthesis; coenzyme A biosynthesis; CoA from (R)-pantothenate: step 4/5. In terms of biological role, reversibly transfers an adenylyl group from ATP to 4'-phosphopantetheine, yielding dephospho-CoA (dPCoA) and pyrophosphate. The polypeptide is Phosphopantetheine adenylyltransferase (Chlorobaculum tepidum (strain ATCC 49652 / DSM 12025 / NBRC 103806 / TLS) (Chlorobium tepidum)).